We begin with the raw amino-acid sequence, 325 residues long: Release factor glutamine methyltransferase (325 aa).

S-adenosyl-L-methionine is bound by residues 141–145 (GTGSG), aspartate 164, tryptophan 193, and asparagine 207. 207 to 210 (NPPY) is a substrate binding site. Residues 306-325 (LPPIHIDAKPSAPGNGPTKA) form a disordered region.

The protein belongs to the protein N5-glutamine methyltransferase family. PrmC subfamily.

The enzyme catalyses L-glutaminyl-[peptide chain release factor] + S-adenosyl-L-methionine = N(5)-methyl-L-glutaminyl-[peptide chain release factor] + S-adenosyl-L-homocysteine + H(+). Functionally, methylates the class 1 translation termination release factors RF1/PrfA and RF2/PrfB on the glutamine residue of the universally conserved GGQ motif. This chain is Release factor glutamine methyltransferase, found in Rhodospirillum rubrum (strain ATCC 11170 / ATH 1.1.1 / DSM 467 / LMG 4362 / NCIMB 8255 / S1).